A 257-amino-acid polypeptide reads, in one-letter code: Snake venom serine protease serpentokallikrein-2 (257 aa).

Residues M1–A18 form the signal peptide. A propeptide spanning residues Q19–L24 is cleaved from the precursor. The Peptidase S1 domain maps to V25–A248. Cystine bridges form between C31-C162, C49-C65, C97-C255, C141-C209, C173-C188, and C199-C224. Catalysis depends on H64, which acts as the Charge relay system. N-linked (GlcNAc...) asparagine glycosylation occurs at N102. D109 (charge relay system) is an active-site residue. The active-site Charge relay system is the S203.

It belongs to the peptidase S1 family. Snake venom subfamily. Monomer. In terms of tissue distribution, expressed by the venom gland.

It is found in the secreted. Functionally, snake venom serine protease that may act in the hemostasis system of the prey. This chain is Snake venom serine protease serpentokallikrein-2, found in Protobothrops mucrosquamatus (Taiwan habu).